Consider the following 219-residue polypeptide: Protein P25 (219 aa).

The short motif at 57 to 62 (KRIRFR) is the Nuclear localization signal element. Residues 103–146 (DPTRLDSSVNELLVSNGLVTHYDRVHNVPIHTDGFEVVDFTTVF) form a transcription activation region. The Nuclear export signal motif lies at 169–178 (VYMVCLVNTV).

It belongs to the benyvirus P25 protein family. Homooligomer.

The protein localises to the host cytoplasm. It localises to the host nucleus. Its function is as follows. Pathogenicity factor implicated in symptom exacerbation. Might function as transcription activator (Potential). This chain is Protein P25, found in Beet necrotic yellow vein virus (isolate Japan/S) (BNYVV).